Reading from the N-terminus, the 513-residue chain is OBERON-like protein (513 aa).

A PHD-type zinc finger spans residues 166-235 (NGFCNLCMCV…VFRCQACSXT (70 aa)). The stretch at 372 to 469 (RELADKAREA…LYEKIKLQES (98 aa)) forms a coiled coil. A disordered region spans residues 493–513 (YNGPPKADSQSNDCHPFRTNP). Residues 500–513 (DSQSNDCHPFRTNP) show a composition bias toward polar residues.

As to quaternary structure, self-interacts and probably forms heteromers. Binds to VPg of pea seed borne mosaic virus (PSbMV), turnip mosaic virus (TuMV) and lettuce mosaic virus (LMV), but not with VPg of tobacco etch virus (TEV), cowpea mosaic virus (CPMV), tomato black ring virus (TBRV) and grapevine fan leaf virus (GFLV).

Its subcellular location is the nucleus. Required for the maintenance and/or establishment of both the shoot and root meristems, probably by controlling the expression of the meristem genes and of genes required for auxin responses. Involved in the development of the basal pole and in auxin-mediated root and vascular development in the embryo. Confers sensitivity to turnip mosaic virus (TuMV) probably by promoting viral movement and multiplication via interaction with TuMV VPg. The polypeptide is OBERON-like protein (PVIP) (Pisum sativum (Garden pea)).